Here is a 299-residue protein sequence, read N- to C-terminus: Ethylmalonyl-CoA decarboxylase (299 aa).

The protein belongs to the enoyl-CoA hydratase/isomerase family.

The protein localises to the cytoplasm. It is found in the cytosol. The enzyme catalyses (2S)-ethylmalonyl-CoA + H(+) = butanoyl-CoA + CO2. The catalysed reaction is (S)-methylmalonyl-CoA + H(+) = propanoyl-CoA + CO2. It catalyses the reaction (2R)-ethylmalonyl-CoA + H(+) = butanoyl-CoA + CO2. Its function is as follows. Decarboxylates ethylmalonyl-CoA, a potentially toxic metabolite, to form butyryl-CoA, suggesting it might be involved in metabolite proofreading. Acts preferentially on (S)-ethylmalonyl-CoA but also has some activity on the (R)-isomer. Also has methylmalonyl-CoA decarboxylase activity at lower level. This is Ethylmalonyl-CoA decarboxylase (echdc1) from Xenopus laevis (African clawed frog).